The chain runs to 330 residues: Virulence plasmid integrase pGP8-D (330 aa).

The 86-residue stretch at 39–124 folds into the Core-binding (CB) domain; it reads FSLFEVIMHW…SYISLTRFLN (86 aa). In terms of domain architecture, Tyr recombinase spans 152 to 327; it reads VKTDAMNSLQ…SREDNASKKM (176 aa). Active-site residues include Arg-189, Lys-214, His-279, Arg-282, and His-305. The O-(3'-phospho-DNA)-tyrosine intermediate role is filled by Tyr-314.

Belongs to the 'phage' integrase family.

This Chlamydia trachomatis serovar L2 (strain ATCC VR-902B / DSM 19102 / 434/Bu) protein is Virulence plasmid integrase pGP8-D.